The primary structure comprises 161 residues: Nucleotide-binding protein Ajs_2750 (161 aa).

The protein belongs to the YajQ family.

Nucleotide-binding protein. This is Nucleotide-binding protein Ajs_2750 from Acidovorax sp. (strain JS42).